The following is a 247-amino-acid chain: Ribonuclease PH (247 aa).

Phosphate contacts are provided by residues R87 and 125 to 127; that span reads GTR.

Belongs to the RNase PH family. As to quaternary structure, homohexameric ring arranged as a trimer of dimers.

The catalysed reaction is tRNA(n+1) + phosphate = tRNA(n) + a ribonucleoside 5'-diphosphate. Functionally, phosphorolytic 3'-5' exoribonuclease that plays an important role in tRNA 3'-end maturation. Removes nucleotide residues following the 3'-CCA terminus of tRNAs; can also add nucleotides to the ends of RNA molecules by using nucleoside diphosphates as substrates, but this may not be physiologically important. Probably plays a role in initiation of 16S rRNA degradation (leading to ribosome degradation) during starvation. The chain is Ribonuclease PH from Frankia casuarinae (strain DSM 45818 / CECT 9043 / HFP020203 / CcI3).